The chain runs to 685 residues: Galactocerebrosidase (685 aa).

The first 42 residues, 1 to 42 (MAEWLLSASRQRRVKAMTAAAGSAGRAAVPFLLCALLAPGGA), serve as a signal peptide directing secretion. Thr-109 lines the substrate pocket. A glycan (N-linked (GlcNAc...) asparagine) is linked at Asn-143. Residues Trp-151 and Asn-197 each coordinate substrate. The active-site Proton donor/acceptor is Glu-198. The active-site Nucleophile is Glu-274. A disulfide bond links Cys-287 and Cys-394. Asn-379 carries N-linked (GlcNAc...) asparagine glycosylation. Arg-396 contacts substrate. N-linked (GlcNAc...) asparagine glycosylation is found at Asn-403, Asn-451, Asn-556, Asn-559, and Asn-602.

It belongs to the glycosyl hydrolase 59 family.

It is found in the lysosome. It catalyses the reaction a beta-D-galactosyl-(1&lt;-&gt;1')-N-acylsphing-4-enine + H2O = an N-acylsphing-4-enine + D-galactose. It carries out the reaction beta-D-galactosyl-(1&lt;-&gt;1)-sphing-4-enine + H2O = sphing-4-enine + D-galactose. The enzyme catalyses a D-galactosylceramide + H2O = an N-acyl-sphingoid base + D-galactose. Its function is as follows. Hydrolyzes the galactose ester bonds of glycolipids such as galactosylceramide and galactosylsphingosine. Enzyme with very low activity responsible for the lysosomal catabolism of galactosylceramide, a major lipid in myelin, kidney and epithelial cells of small intestine and colon. The sequence is that of Galactocerebrosidase from Macaca mulatta (Rhesus macaque).